A 165-amino-acid polypeptide reads, in one-letter code: 16S rRNA aminocarboxypropyltransferase (165 aa).

4 residues coordinate S-adenosyl-L-methionine: Thr-17, Leu-62, Leu-83, and Thr-102.

It belongs to the TDD superfamily. TSR3 family.

The protein localises to the cytoplasm. It catalyses the reaction an N(1)-methylpseudouridine in rRNA + S-adenosyl-L-methionine = N(1)-methyl-N(3)-[(3S)-3-amino-3-carboxypropyl]pseudouridine in rRNA + S-methyl-5'-thioadenosine + H(+). Functionally, aminocarboxypropyltransferase that catalyzes the aminocarboxypropyl transfer on pseudouridine corresponding to position 914 in M.jannaschii 16S rRNA. It constitutes the last step in biosynthesis of the hypermodified N1-methyl-N3-(3-amino-3-carboxypropyl) pseudouridine (m1acp3-Psi). This Halobacterium salinarum (strain ATCC 700922 / JCM 11081 / NRC-1) (Halobacterium halobium) protein is 16S rRNA aminocarboxypropyltransferase.